A 281-amino-acid polypeptide reads, in one-letter code: 32 kDa heat shock protein (281 aa).

Positions 142–168 are enriched in acidic residues; it reads EDDEEIDSDEEFGDSDQDEEDSDDEEI. A disordered region spans residues 142–281; the sequence is EDDEEIDSDE…NENNKKKQKN (140 aa). Residues 180-209 are compositionally biased toward basic and acidic residues; it reads KITEISEVPESKKEKTPEPKKVPEPKKEQV. The span at 210–273 shows a compositional bias: low complexity; sequence KQPTQPQQKK…NNKRPQNQNE (64 aa).

This is 32 kDa heat shock protein (hspC) from Dictyostelium discoideum (Social amoeba).